We begin with the raw amino-acid sequence, 680 residues long: DNA-directed RNA polymerase subunit beta' (680 aa).

Residues C69, C71, C87, and C90 each coordinate Zn(2+). Positions 489, 491, and 493 each coordinate Mg(2+).

This sequence belongs to the RNA polymerase beta' chain family. RpoC1 subfamily. In plastids the minimal PEP RNA polymerase catalytic core is composed of four subunits: alpha, beta, beta', and beta''. When a (nuclear-encoded) sigma factor is associated with the core the holoenzyme is formed, which can initiate transcription. Requires Mg(2+) as cofactor. It depends on Zn(2+) as a cofactor.

Its subcellular location is the plastid. It localises to the chloroplast. It carries out the reaction RNA(n) + a ribonucleoside 5'-triphosphate = RNA(n+1) + diphosphate. In terms of biological role, DNA-dependent RNA polymerase catalyzes the transcription of DNA into RNA using the four ribonucleoside triphosphates as substrates. The chain is DNA-directed RNA polymerase subunit beta' from Nasturtium officinale (Watercress).